The following is a 190-amino-acid chain: Peptidyl-tRNA hydrolase (190 aa).

Tyr14 contributes to the tRNA binding site. His19 acts as the Proton acceptor in catalysis. Residues Tyr64, Asn66, and Asn112 each contribute to the tRNA site.

Belongs to the PTH family. In terms of assembly, monomer.

Its subcellular location is the cytoplasm. The enzyme catalyses an N-acyl-L-alpha-aminoacyl-tRNA + H2O = an N-acyl-L-amino acid + a tRNA + H(+). Its function is as follows. Hydrolyzes ribosome-free peptidyl-tRNAs (with 1 or more amino acids incorporated), which drop off the ribosome during protein synthesis, or as a result of ribosome stalling. Functionally, catalyzes the release of premature peptidyl moieties from peptidyl-tRNA molecules trapped in stalled 50S ribosomal subunits, and thus maintains levels of free tRNAs and 50S ribosomes. In Chlorobium limicola (strain DSM 245 / NBRC 103803 / 6330), this protein is Peptidyl-tRNA hydrolase.